The following is a 237-amino-acid chain: Demethylmenaquinone methyltransferase (237 aa).

Residues Thr-58, Asp-79, and 106 to 107 (NA) contribute to the S-adenosyl-L-methionine site.

The protein belongs to the class I-like SAM-binding methyltransferase superfamily. MenG/UbiE family.

It catalyses the reaction a 2-demethylmenaquinol + S-adenosyl-L-methionine = a menaquinol + S-adenosyl-L-homocysteine + H(+). The protein operates within quinol/quinone metabolism; menaquinone biosynthesis; menaquinol from 1,4-dihydroxy-2-naphthoate: step 2/2. Methyltransferase required for the conversion of demethylmenaquinol (DMKH2) to menaquinol (MKH2). This chain is Demethylmenaquinone methyltransferase, found in Bacillus cytotoxicus (strain DSM 22905 / CIP 110041 / 391-98 / NVH 391-98).